Reading from the N-terminus, the 346-residue chain is 3 beta-hydroxysteroid dehydrogenase/Delta 5--&gt;4-isomerase (346 aa).

Tyr147 acts as the Proton acceptor in catalysis. Lys151 serves as a coordination point for NAD(+).

It belongs to the 3-beta-HSD family.

The catalysed reaction is a 3beta-hydroxy-Delta(5)-steroid + NAD(+) = a 3-oxo-Delta(5)-steroid + NADH + H(+). The enzyme catalyses a 3-oxo-Delta(5)-steroid = a 3-oxo-Delta(4)-steroid. It participates in lipid metabolism; steroid biosynthesis. Its function is as follows. Catalyzes the oxidative conversion of Delta(5)-ene-3-beta-hydroxy steroid, and the oxidative conversion of ketosteroids. The 3-beta-HSD enzymatic system plays a crucial role in the biosynthesis of all classes of hormonal steroids. During viral infection, steroid production contributes to virulence by inhibiting the host inflammatory response. The sequence is that of 3 beta-hydroxysteroid dehydrogenase/Delta 5--&gt;4-isomerase (OPG174) from Vaccinia virus (strain Western Reserve) (VACV).